Reading from the N-terminus, the 341-residue chain is Anthranilate phosphoribosyltransferase (341 aa).

Residues Gly-82, 85-86, Thr-90, 92-95, 110-118, and Ser-122 contribute to the 5-phospho-alpha-D-ribose 1-diphosphate site; these read GD, NIST, and KHGGRSVSS. Residue Gly-82 participates in anthranilate binding. Mg(2+) is bound at residue Ser-94. Arg-168 provides a ligand contact to anthranilate. Asp-227 and Glu-228 together coordinate Mg(2+).

This sequence belongs to the anthranilate phosphoribosyltransferase family. Homodimer. Requires Mg(2+) as cofactor.

It catalyses the reaction N-(5-phospho-beta-D-ribosyl)anthranilate + diphosphate = 5-phospho-alpha-D-ribose 1-diphosphate + anthranilate. Its pathway is amino-acid biosynthesis; L-tryptophan biosynthesis; L-tryptophan from chorismate: step 2/5. In terms of biological role, catalyzes the transfer of the phosphoribosyl group of 5-phosphorylribose-1-pyrophosphate (PRPP) to anthranilate to yield N-(5'-phosphoribosyl)-anthranilate (PRA). The polypeptide is Anthranilate phosphoribosyltransferase (Nitrosomonas eutropha (strain DSM 101675 / C91 / Nm57)).